Here is a 697-residue protein sequence, read N- to C-terminus: DNA ligase (697 aa).

Residues 41-45, 90-91, and glutamate 129 each bind NAD(+); these read DPVYD and SL. Catalysis depends on lysine 131, which acts as the N6-AMP-lysine intermediate. NAD(+) is bound by residues arginine 152, glutamate 189, lysine 308, and lysine 332. Residues cysteine 426, cysteine 429, cysteine 444, and cysteine 449 each coordinate Zn(2+). One can recognise a BRCT domain in the interval 617–697; that stretch reads AANHHLTGST…ALQNMLRGST (81 aa).

The protein belongs to the NAD-dependent DNA ligase family. LigA subfamily. Requires Mg(2+) as cofactor. It depends on Mn(2+) as a cofactor.

It catalyses the reaction NAD(+) + (deoxyribonucleotide)n-3'-hydroxyl + 5'-phospho-(deoxyribonucleotide)m = (deoxyribonucleotide)n+m + AMP + beta-nicotinamide D-nucleotide.. DNA ligase that catalyzes the formation of phosphodiester linkages between 5'-phosphoryl and 3'-hydroxyl groups in double-stranded DNA using NAD as a coenzyme and as the energy source for the reaction. It is essential for DNA replication and repair of damaged DNA. This Synechococcus sp. (strain CC9311) protein is DNA ligase.